The chain runs to 162 residues: MRNSRFCAILAVISAISVSYVLAQRSQQSVIADLGKLIVDNCPPMLCTGLDCAVVTERNGCQLCACPIGSPSRGCDPMPFILWHDLIVNGCPNVTLNSRDPAQKVHRWFRRVNRFTNTDQCEPYIFPYCPELDFNLWRSPRTKQECELYCYSIDEQRKRGII.

Positions 1–23 are cleaved as a signal peptide; sequence MRNSRFCAILAVISAISVSYVLA.

It localises to the secreted. Its function is as follows. Secreted protein that is involved in larval elongation, early adult growth and male tail development. The protein is Protein lon-8 of Caenorhabditis elegans.